Consider the following 489-residue polypeptide: Glycogen synthase (489 aa).

Residue lysine 15 participates in ADP-alpha-D-glucose binding.

It belongs to the glycosyltransferase 1 family. Bacterial/plant glycogen synthase subfamily.

It catalyses the reaction [(1-&gt;4)-alpha-D-glucosyl](n) + ADP-alpha-D-glucose = [(1-&gt;4)-alpha-D-glucosyl](n+1) + ADP + H(+). It participates in glycan biosynthesis; glycogen biosynthesis. Synthesizes alpha-1,4-glucan chains using ADP-glucose. This is Glycogen synthase from Francisella tularensis subsp. novicida (strain U112).